Consider the following 282-residue polypeptide: U1 small nuclear ribonucleoprotein A (282 aa).

Alanine 2 is modified (N-acetylalanine). Residues 10-89 form the RRM 1 domain; it reads HTIYINNLNE…KPMRIQYAKT (80 aa). Position 60 is an N6-acetyllysine (lysine 60). A disordered region spans residues 101-141; the sequence is FVERDRKREKRKPKSQETPAAKKAVQGGAAAPVVGTVQGPV. A compositionally biased stretch (low complexity) spans 119–141; sequence PAAKKAVQGGAAAPVVGTVQGPV. An Omega-N-methylarginine modification is found at arginine 152. One can recognise an RRM 2 domain in the interval 208 to 282; it reads HILFLTNLPE…NAMKISFAKK (75 aa).

Belongs to the RRM U1 A/B'' family. As to quaternary structure, U1 snRNP is composed of the 7 core Sm proteins SNRPB, SNRPD1, SNRPD2, SNRPD3, SNRPE, SNRPF and SNRPG that assemble in a heptameric protein ring on the Sm site of the small nuclear RNA to form the core snRNP, and at least three U1 snRNP-specific proteins SNRNP70/U1-70K, SNRPA/U1-A and SNRPC/U1-C. Interacts with SFPQ; component of a snRNP-free complex with SFPQ.

The protein resides in the nucleus. In terms of biological role, component of the spliceosomal U1 snRNP, which is essential for recognition of the pre-mRNA 5' splice-site and the subsequent assembly of the spliceosome. U1 snRNP is the first snRNP to interact with pre-mRNA. This interaction is required for the subsequent binding of U2 snRNP and the U4/U6/U5 tri-snRNP. SNRPA binds stem loop II of U1 snRNA. In a snRNP-free form (SF-A) may be involved in coupled pre-mRNA splicing and polyadenylation process. May bind preferentially to the 5'-UGCAC-3' motif on RNAs. This chain is U1 small nuclear ribonucleoprotein A (SNRPA), found in Bos taurus (Bovine).